Consider the following 466-residue polypeptide: Histidine--tRNA ligase (466 aa).

It belongs to the class-II aminoacyl-tRNA synthetase family. In terms of assembly, homodimer.

Its subcellular location is the cytoplasm. It carries out the reaction tRNA(His) + L-histidine + ATP = L-histidyl-tRNA(His) + AMP + diphosphate + H(+). The polypeptide is Histidine--tRNA ligase (Xylella fastidiosa (strain M12)).